Here is a 516-residue protein sequence, read N- to C-terminus: Solute carrier family 49 member A3 (516 aa).

A compositionally biased stretch (basic and acidic residues) spans 1-10 (MAGTMDRLED). Residues 1–22 (MAGTMDRLEDCNSPETSGTAGD) are disordered. The next 12 helical transmembrane spans lie at 34-54 (WVFL…WLSF), 74-94 (WLSL…IWVL), 104-124 (ILGA…CLPV), 139-159 (LCAL…ALWF), 170-190 (ISTM…PALV), 199-219 (MLGI…VCLW), 253-273 (VLLA…SALL), 289-309 (LCGA…GLYV), 321-341 (IGLC…QLQG), 344-364 (LALA…APVV), 382-402 (GLIF…LTAL), and 425-445 (VSLL…VIFF). The tract at residues 453–516 (EAESGGSSSP…EWAETMPRDV (64 aa)) is disordered. The segment covering 504–516 (GHSEWAETMPRDV) has biased composition (basic and acidic residues).

Belongs to the major facilitator superfamily.

Its subcellular location is the membrane. The chain is Solute carrier family 49 member A3 (Slc49a3) from Mus musculus (Mouse).